Here is a 137-residue protein sequence, read N- to C-terminus: Profilin-3 (137 aa).

The protein belongs to the profilin family. As to quaternary structure, interacts with ACTRT3. Testis specific.

It localises to the cytoplasm. The protein resides in the cytoskeleton. It is found in the nucleus. Its function is as follows. Binds to actin and affects the structure of the cytoskeleton. Slightly reduces actin polymerization. Binds to poly-L-proline, phosphatidylinositol 3-phosphate (PtdIns(3)P), phosphatidylinositol 4,5-bisphosphate (PtdIns(4,5)P2) and phosphatidylinositol 4-phosphate (PtdIns(4)P). May be involved in spermatogenesis. This is Profilin-3 (PFN3) from Homo sapiens (Human).